A 752-amino-acid polypeptide reads, in one-letter code: Photosystem I P700 chlorophyll a apoprotein A1 (752 aa).

Helical transmembrane passes span 73–96 (IFSA…FHGA), 159–182 (LYAT…FHYH), 198–222 (MNHH…HISI), 294–312 (TAHH…GHMY), 349–372 (WHAQ…HHMY), 388–414 (LSLF…IFMV), 436–458 (AIIS…LYIH), and 533–551 (FMVH…LILV). Cys-575 and Cys-584 together coordinate [4Fe-4S] cluster. 2 helical membrane-spanning segments follow: residues 591 to 612 (HVFL…HFSW) and 666 to 688 (LSAY…MFLF). His-677 contributes to the chlorophyll a' binding site. Chlorophyll a is bound by residues Met-685 and Tyr-693. Trp-694 lines the phylloquinone pocket. The chain crosses the membrane as a helical span at residues 726-746 (AVGVAHYLLGGIGTTWAFFLA).

It belongs to the PsaA/PsaB family. The PsaA/B heterodimer binds the P700 chlorophyll special pair and subsequent electron acceptors. PSI consists of a core antenna complex that captures photons, and an electron transfer chain that converts photonic excitation into a charge separation. The eukaryotic PSI reaction center is composed of at least 11 subunits. P700 is a chlorophyll a/chlorophyll a' dimer, A0 is one or more chlorophyll a, A1 is one or both phylloquinones and FX is a shared 4Fe-4S iron-sulfur center. is required as a cofactor.

Its subcellular location is the plastid. It localises to the chloroplast thylakoid membrane. It catalyses the reaction reduced [plastocyanin] + hnu + oxidized [2Fe-2S]-[ferredoxin] = oxidized [plastocyanin] + reduced [2Fe-2S]-[ferredoxin]. Functionally, psaA and PsaB bind P700, the primary electron donor of photosystem I (PSI), as well as the electron acceptors A0, A1 and FX. PSI is a plastocyanin/cytochrome c6-ferredoxin oxidoreductase, converting photonic excitation into a charge separation, which transfers an electron from the donor P700 chlorophyll pair to the spectroscopically characterized acceptors A0, A1, FX, FA and FB in turn. Oxidized P700 is reduced on the lumenal side of the thylakoid membrane by plastocyanin or cytochrome c6. In Gracilaria tenuistipitata var. liui (Red alga), this protein is Photosystem I P700 chlorophyll a apoprotein A1.